A 355-amino-acid polypeptide reads, in one-letter code: GTPase Obg (355 aa).

An Obg domain is found at 1–159; it reads MKFLDEAKVY…KTIWLRLKLI (159 aa). One can recognise an OBG-type G domain in the interval 160–327; sequence ADAGLVGLPN…ALRALRDIIV (168 aa). GTP-binding positions include 166–173, 191–195, 212–215, 279–282, and 308–310; these read GLPNAGKS, FTTLH, DIPG, SQID, and SAA. Mg(2+) is bound by residues serine 173 and threonine 193. A disordered region spans residues 333 to 355; it reads GDTALPDRSMPHESEVEEEDDRL.

Belongs to the TRAFAC class OBG-HflX-like GTPase superfamily. OBG GTPase family. As to quaternary structure, monomer. Mg(2+) serves as cofactor.

Its subcellular location is the cytoplasm. Functionally, an essential GTPase which binds GTP, GDP and possibly (p)ppGpp with moderate affinity, with high nucleotide exchange rates and a fairly low GTP hydrolysis rate. Plays a role in control of the cell cycle, stress response, ribosome biogenesis and in those bacteria that undergo differentiation, in morphogenesis control. The polypeptide is GTPase Obg (Agrobacterium fabrum (strain C58 / ATCC 33970) (Agrobacterium tumefaciens (strain C58))).